Here is a 517-residue protein sequence, read N- to C-terminus: 6-phosphogluconate dehydrogenase, decarboxylating (517 aa).

NADP(+) contacts are provided by residues 35–40, 58–60, 100–102, and Asn-128; these read GLAVMG, NRT, and VKA. Substrate-binding positions include Asn-128 and 154-156; that span reads SGG. Lys-208 (proton acceptor) is an active-site residue. 211-212 contributes to the substrate binding site; the sequence is HN. The active-site Proton donor is Glu-215. 5 residues coordinate substrate: Tyr-216, Lys-286, Arg-313, Arg-474, and His-480.

This sequence belongs to the 6-phosphogluconate dehydrogenase family. In terms of assembly, homodimer.

The catalysed reaction is 6-phospho-D-gluconate + NADP(+) = D-ribulose 5-phosphate + CO2 + NADPH. Its pathway is carbohydrate degradation; pentose phosphate pathway; D-ribulose 5-phosphate from D-glucose 6-phosphate (oxidative stage): step 3/3. In terms of biological role, catalyzes the oxidative decarboxylation of 6-phosphogluconate to ribulose 5-phosphate and CO(2), with concomitant reduction of NADP to NADPH. The polypeptide is 6-phosphogluconate dehydrogenase, decarboxylating (DOR14) (Candida albicans (Yeast)).